We begin with the raw amino-acid sequence, 696 residues long: Gametogenetin-binding protein 2 (696 aa).

Phosphoserine occurs at positions 360 and 602.

As to quaternary structure, interacts with isoform 1 of GGN. Testis-specific.

It is found in the cytoplasmic vesicle. May be involved in spermatogenesis. In Mus musculus (Mouse), this protein is Gametogenetin-binding protein 2 (Ggnbp2).